The following is a 413-amino-acid chain: Phosphopentomutase (413 aa).

6 residues coordinate Mn(2+): aspartate 11, aspartate 306, histidine 311, aspartate 347, histidine 348, and histidine 359.

It belongs to the phosphopentomutase family. Mn(2+) is required as a cofactor.

It localises to the cytoplasm. The catalysed reaction is 2-deoxy-alpha-D-ribose 1-phosphate = 2-deoxy-D-ribose 5-phosphate. It catalyses the reaction alpha-D-ribose 1-phosphate = D-ribose 5-phosphate. The protein operates within carbohydrate degradation; 2-deoxy-D-ribose 1-phosphate degradation; D-glyceraldehyde 3-phosphate and acetaldehyde from 2-deoxy-alpha-D-ribose 1-phosphate: step 1/2. In terms of biological role, isomerase that catalyzes the conversion of deoxy-ribose 1-phosphate (dRib-1-P) and ribose 1-phosphate (Rib-1-P) to deoxy-ribose 5-phosphate (dRib-5-P) and ribose 5-phosphate (Rib-5-P), respectively. In Helicobacter pylori (strain P12), this protein is Phosphopentomutase.